An 836-amino-acid chain; its full sequence is Ethylene receptor 3 (836 aa).

Transmembrane regions (helical) follow at residues 137–157 (LIAAAYFSIPLEILYFVAGLR), 166–186 (LVQFGAFIVLCGLTHLLTAFT), and 204–224 (LTALVSFLTAITLLTLIPQLL). Positions 176 and 180 each coordinate Cu cation. Positions 269-413 (DRHTVLYTTL…VVAGQVAVAL (145 aa)) constitute a GAF domain. The stretch at 416–452 (ATLLEESRAMRDRLAEQNRELLQARRDALMANEARQA) forms a coiled coil. Residues 457–691 (MSQGMRRPIH…LVLRFQLQSP (235 aa)) enclose the Histidine kinase domain. The Response regulatory domain occupies 718–834 (LLIDDDDDIN…LKDELARILQ (117 aa)).

Belongs to the ethylene receptor family. Requires Cu cation as cofactor.

The protein resides in the endoplasmic reticulum membrane. It catalyses the reaction ATP + protein L-histidine = ADP + protein N-phospho-L-histidine.. Functionally, ethylene receptor related to bacterial two-component regulators. Acts as a negative regulator of ethylene signaling. May delay the transition from the vegetative stage to the floral stage by up-regulating GI (GIGANTEA) and RCN1 and cause starch accumulation in stems by down-regulating the alpha-amylase AMY3D. This is Ethylene receptor 3 (ETR3) from Oryza sativa subsp. japonica (Rice).